The primary structure comprises 363 residues: MNKLALYCRIGFEKETAAEITEKAAEKGVFGFARVNNDSGYVIFECYQEGEADRLAREIPFNQLIFARQMIVISDLLENLPPTDRITPIIEEYNRIGSLVNLHRTTELFVETADTNEAKELSVFCRKFTVPLRQALKKQGYLAFKEVKKSGLTLHIFFVKPNCCYVGYSYNNNHSPNFMGILRLKFPPQAPSRSTLKLHEAILTFLSPEEERKCMNESMYGVDLGACPGGWTYQLVKRGLFVYAVDHGKMAASLHDTGRIDHCPEDGFKFQPPKRSKIDWLVCDMVEQPIRIAALIAKWLVNEWCRESIFNLKLPMKKRYAEVQNCLQLITNELDKAGFKYHIQAKHLYHDREEITVHISVKK.

S-adenosyl-L-methionine contacts are provided by residues Ser-194, 227–230 (CPGG), Asp-246, Asp-266, and Asp-284. Lys-313 acts as the Proton acceptor in catalysis.

The protein belongs to the class I-like SAM-binding methyltransferase superfamily. RNA methyltransferase RlmE family. RlmM subfamily. As to quaternary structure, monomer.

Its subcellular location is the cytoplasm. The catalysed reaction is cytidine(2498) in 23S rRNA + S-adenosyl-L-methionine = 2'-O-methylcytidine(2498) in 23S rRNA + S-adenosyl-L-homocysteine + H(+). In terms of biological role, catalyzes the 2'-O-methylation at nucleotide C2498 in 23S rRNA. The chain is Ribosomal RNA large subunit methyltransferase M from Mannheimia succiniciproducens (strain KCTC 0769BP / MBEL55E).